A 234-amino-acid chain; its full sequence is Adenosine 5'-phosphosulfate reductase (234 aa).

[4Fe-4S] cluster contacts are provided by Cys120, Cys121, Cys203, and Cys206. Cys229 acts as the Nucleophile; cysteine thiosulfonate intermediate in catalysis.

This sequence belongs to the PAPS reductase family. CysH subfamily. The cofactor is [4Fe-4S] cluster.

The protein resides in the cytoplasm. The catalysed reaction is [thioredoxin]-disulfide + sulfite + AMP + 2 H(+) = adenosine 5'-phosphosulfate + [thioredoxin]-dithiol. It functions in the pathway sulfur metabolism; hydrogen sulfide biosynthesis; sulfite from sulfate. Functionally, catalyzes the formation of sulfite from adenosine 5'-phosphosulfate (APS) using thioredoxin as an electron donor. The sequence is that of Adenosine 5'-phosphosulfate reductase from Bacillus cereus (strain ZK / E33L).